Here is a 273-residue protein sequence, read N- to C-terminus: 4-hydroxy-tetrahydrodipicolinate reductase (273 aa).

NAD(+) contacts are provided by residues 12 to 17 (GAGGRM) and E38. Residue R39 participates in NADP(+) binding. NAD(+) is bound by residues 102–104 (GTT) and 126–129 (AANF). H159 functions as the Proton donor/acceptor in the catalytic mechanism. H160 is a binding site for (S)-2,3,4,5-tetrahydrodipicolinate. Catalysis depends on K163, which acts as the Proton donor. 169–170 (GT) provides a ligand contact to (S)-2,3,4,5-tetrahydrodipicolinate.

It belongs to the DapB family. As to quaternary structure, homotetramer.

It localises to the cytoplasm. The enzyme catalyses (S)-2,3,4,5-tetrahydrodipicolinate + NAD(+) + H2O = (2S,4S)-4-hydroxy-2,3,4,5-tetrahydrodipicolinate + NADH + H(+). It catalyses the reaction (S)-2,3,4,5-tetrahydrodipicolinate + NADP(+) + H2O = (2S,4S)-4-hydroxy-2,3,4,5-tetrahydrodipicolinate + NADPH + H(+). Its pathway is amino-acid biosynthesis; L-lysine biosynthesis via DAP pathway; (S)-tetrahydrodipicolinate from L-aspartate: step 4/4. Functionally, catalyzes the conversion of 4-hydroxy-tetrahydrodipicolinate (HTPA) to tetrahydrodipicolinate. The chain is 4-hydroxy-tetrahydrodipicolinate reductase from Shigella sonnei (strain Ss046).